Here is a 200-residue protein sequence, read N- to C-terminus: ATP-dependent Clp protease proteolytic subunit 3 (200 aa).

The active-site Nucleophile is the S101. H126 is an active-site residue.

This sequence belongs to the peptidase S14 family. In terms of assembly, fourteen ClpP subunits assemble into 2 heptameric rings which stack back to back to give a disk-like structure with a central cavity, resembling the structure of eukaryotic proteasomes.

It localises to the cytoplasm. The enzyme catalyses Hydrolysis of proteins to small peptides in the presence of ATP and magnesium. alpha-casein is the usual test substrate. In the absence of ATP, only oligopeptides shorter than five residues are hydrolyzed (such as succinyl-Leu-Tyr-|-NHMec, and Leu-Tyr-Leu-|-Tyr-Trp, in which cleavage of the -Tyr-|-Leu- and -Tyr-|-Trp bonds also occurs).. Its function is as follows. Cleaves peptides in various proteins in a process that requires ATP hydrolysis. Has a chymotrypsin-like activity. Plays a major role in the degradation of misfolded proteins. This chain is ATP-dependent Clp protease proteolytic subunit 3, found in Parasynechococcus marenigrum (strain WH8102).